The chain runs to 393 residues: Triacylglycerol lipase 1 (393 aa).

The first 20 residues, 1–20, serve as a signal peptide directing secretion; sequence MKWLLVAVLTSLTIFSALTQ. Residue Asn-41 is glycosylated (N-linked (GlcNAc...) asparagine). Ser-166 functions as the Nucleophile in the catalytic mechanism. Residue Asn-261 is glycosylated (N-linked (GlcNAc...) asparagine). Catalysis depends on charge relay system residues Asp-334 and His-363.

It belongs to the AB hydrolase superfamily. Lipase family. In terms of tissue distribution, expressed in seedlings, roots, leaves, flowers and siliques. Specifically expressed in the epidermis.

It localises to the secreted. It carries out the reaction a triacylglycerol + H2O = a diacylglycerol + a fatty acid + H(+). It catalyses the reaction 1,2,3-tributanoylglycerol + H2O = dibutanoylglycerol + butanoate + H(+). The catalysed reaction is 1,2,3-trioctanoylglycerol + H2O = dioctanoylglycerol + octanoate + H(+). The protein operates within lipid metabolism; glycerolipid metabolism. Its function is as follows. Triacylglycerol (TAG) lipase active on triolein, trioctanoin, tributyrin and 1,3-Diolein, but not on phospho- and galactolipids. Involved but dispensable for TAG storage breakdown during seed germination. The chain is Triacylglycerol lipase 1 from Arabidopsis thaliana (Mouse-ear cress).